The chain runs to 579 residues: Golvesin (579 aa).

The required for targeting to the plasma membrane stretch occupies residues 1–75 (MTSVNEHSLL…NNNNNNNNNN (75 aa)). The tract at residues 1 to 79 (MTSVNEHSLL…NNNNNNSNTG (79 aa)) is disordered. Residues 1-94 (MTSVNEHSLL…KKKKWNFRKK (94 aa)) lie on the Lumenal side of the membrane. The segment covering 11–77 (INNNENNDNN…NNNNNNNNSN (67 aa)) has biased composition (low complexity). A helical; Signal-anchor for type III membrane protein membrane pass occupies residues 95 to 115 (ILPMIVILIITAIVVCLVVFS). The tract at residues 95–118 (ILPMIVILIITAIVVCLVVFSLPF) is required for membrane targeting. Over 116-578 (LPFDSSNTIY…SNDFVIAESP (463 aa)) the chain is Cytoplasmic. The interval 559–579 (WPSSKGIPGFSNDFVIAESPE) is required for transfer to endosomes and contractile vacuoles; the protein is trapped in the Golgi.

Its subcellular location is the contractile vacuole membrane. The protein resides in the endosome membrane. It localises to the golgi apparatus membrane. The protein is Golvesin (gol) of Dictyostelium discoideum (Social amoeba).